A 907-amino-acid polypeptide reads, in one-letter code: MFSKILTKVIGSRNDRTLRKLRKIVDQINKLEPQFESLQDEELKAKTIEFRSRLEQGESLDDLLPEAFATVREASKRLYGMRHFDVQMIGGMVLNDSQIAEMRTGEGKTLTATLPCYLNALTGKGVHVVTVNDYLAKRDAETNRELFEFLGMTVGINVPNMPPQEKKLAYQSDILYGTNNEFGFDYLRDNMAFRAEDRVQRERYFAVIDEVDSILIDEARTPLIISGPADDSSELYTRINILIPQLVKQDEEDSEDYRGEGHYTLDEKGKQTHLTENGQEFVEQLLKDEGLMEEEDTLYSPANISLLHHINAALRAHVLFEKDVDYIVKDDEVIIVDEHTGRTMPGRRWSEGLHQAVEAKEGVKIQNENQTLASITFQNFFRLYDKLSGMTGTADTEAFEFQSIYGLDTVVIPTNRPMTRNDMGDLVYMTEAEKFAAIIEDIKACSERGQPVLVGTVSIEKSELLSNALKTAKIKHNVLNAKFHEQEADIVANAGTSSAVTIATNMAGRGTDIVLGGNWQAEVAKLDNPSAEQVQTIKAAWKEAHDTVLTAGGLHIIGTERHESRRIDNQLRGRAGRQGDAGSSRFYLSMEDALMRIFASDRVSNMMKKLGMEEGEAIEHPWVTKAIENAQRKVEGRNFDIRKQLLEYDDVANDQRKVVYELRDELMNVDDISEMINHNRQDVLEGLFGQYIPPQSLEEMWDVEGLTTRLRTDFDLDLPIQEWLDSDNKLHEDNLREKIIESAFQVYKEKEESVGESVLRNFEKAVMLQTLDGLWKEHLAAMDHLRQGIHLRGYAQKNPKQEYKRESFELFEGLLDTLKLDVVSILSKVRVQQQEDVERMEEQRRKNAEEVARLQKLQHQNAENQLDDGHSSDQNHSPMVRDERKVGRNEVCPCGSGKKYKQCHGKI.

ATP is bound by residues Gln-87, 105 to 109 (GEGKT), and Asp-512. The segment at 862–885 (AENQLDDGHSSDQNHSPMVRDERK) is disordered. Residues 867–885 (DDGHSSDQNHSPMVRDERK) are compositionally biased toward basic and acidic residues. Residues Cys-892, Cys-894, Cys-903, and His-904 each contribute to the Zn(2+) site.

This sequence belongs to the SecA family. Monomer and homodimer. Part of the essential Sec protein translocation apparatus which comprises SecA, SecYEG and auxiliary proteins SecDF-YajC and YidC. Requires Zn(2+) as cofactor.

It is found in the cell inner membrane. The protein localises to the cytoplasm. It catalyses the reaction ATP + H2O + cellular proteinSide 1 = ADP + phosphate + cellular proteinSide 2.. Its function is as follows. Part of the Sec protein translocase complex. Interacts with the SecYEG preprotein conducting channel. Has a central role in coupling the hydrolysis of ATP to the transfer of proteins into and across the cell membrane, serving both as a receptor for the preprotein-SecB complex and as an ATP-driven molecular motor driving the stepwise translocation of polypeptide chains across the membrane. In Aliivibrio salmonicida (strain LFI1238) (Vibrio salmonicida (strain LFI1238)), this protein is Protein translocase subunit SecA.